The primary structure comprises 158 residues: Transcription elongation factor GreA (158 aa).

The protein belongs to the GreA/GreB family.

Its function is as follows. Necessary for efficient RNA polymerase transcription elongation past template-encoded arresting sites. The arresting sites in DNA have the property of trapping a certain fraction of elongating RNA polymerases that pass through, resulting in locked ternary complexes. Cleavage of the nascent transcript by cleavage factors such as GreA or GreB allows the resumption of elongation from the new 3'terminus. GreA releases sequences of 2 to 3 nucleotides. This is Transcription elongation factor GreA from Wigglesworthia glossinidia brevipalpis.